The chain runs to 157 residues: 17.6 kDa class I heat shock protein 3 (157 aa).

A sHSP domain is found at 43–157 (DVAAFTNAKV…PEVKSIDISG (115 aa)).

The protein belongs to the small heat shock protein (HSP20) family. In terms of assembly, may form oligomeric structures.

The protein localises to the cytoplasm. This chain is 17.6 kDa class I heat shock protein 3 (HSP17.6C), found in Arabidopsis thaliana (Mouse-ear cress).